The primary structure comprises 583 residues: MTTARRRPKRRGTDARTALRNVPILADIDDEQLERLATTVERRHVPANQWLFHAGEPADSIYIVDSGRFVAVAPEGHVFAEMASGDSIGDLGVIAGAARSAGVRALRDGVVWRIAAETFTDMLEATPLLQSAMLRAMARMLRQSRPAKTARRPRVIGVVSNGDTAAAPMVDAIATSLDSHGRTAVIAPPVETTSAVQEYDELVEAFSETLDRAERSNDWVLVVADRGAGDLWRHYVSAQSDRLVVLVDQRYPPDAVDSLATQRPVHLITCLAEPDPSWWDRLAPVSHHPANSDGFGALARRIAGRSLGLVMAGGGARGLAHFGVYQELTEAGVVIDRFGGTSSGAIASAAFALGMDAGDAIAAAREFIAGSDPLDDYTIPISALTRGGRVDRLVQGFFGNTLIEHLPRGFFSVSADMITGDQIIHRRGSVSGAVRASISIPGLIPPVHNGEQLLVDGGLLNNLPANVMCADTDGEVICVDLRRTFVPSKGFGLLPPIVTPPGLLRRLLTGTDNALPPLQETLLRAFDLAASTANLRELPRVAAIIEPDVSKIGVLNFKQIDAALEAGRMAARAALQAQPDLVR.

A nucleoside 3',5'-cyclic phosphate is bound at residue I24–M140. The region spanning L309–C469 is the PNPLA domain. Residues G313–G318 carry the GXGXXG motif. The GXSXG signature appears at G340–G344. S342 serves as the catalytic Nucleophile. The Proton acceptor role is filled by D456. A DGA/G motif is present at residues D456–G458.

The protein belongs to the NTE family.

This is an uncharacterized protein from Mycobacterium tuberculosis (strain CDC 1551 / Oshkosh).